Here is a 421-residue protein sequence, read N- to C-terminus: Gamma-glutamyl phosphate reductase (421 aa).

Belongs to the gamma-glutamyl phosphate reductase family.

The protein localises to the cytoplasm. The catalysed reaction is L-glutamate 5-semialdehyde + phosphate + NADP(+) = L-glutamyl 5-phosphate + NADPH + H(+). The protein operates within amino-acid biosynthesis; L-proline biosynthesis; L-glutamate 5-semialdehyde from L-glutamate: step 2/2. In terms of biological role, catalyzes the NADPH-dependent reduction of L-glutamate 5-phosphate into L-glutamate 5-semialdehyde and phosphate. The product spontaneously undergoes cyclization to form 1-pyrroline-5-carboxylate. This Erythrobacter litoralis (strain HTCC2594) protein is Gamma-glutamyl phosphate reductase.